A 575-amino-acid polypeptide reads, in one-letter code: MPGPSLSLALVLSAMGALLRPGTPREEVFSTSALPREQATGSGALIFQQAWDWPLSSLWLPGSPLDPLCLVTLHGSGNGSRAPLRVVGVLSSYEQAFLEAVRRTHWGLSDLTTFAVCPAGNGQPVLPHLQRLQAWLGEPGGRWLVVLHLEEVTWEPTPLLRFQEPPPGGASPPELALLVVYPGPGLEVTVTGAGLPGTQSLCLTADSDFLALVVDHPEGAWRRPGLALTLRRRGNGALLSTAQLQALLFGADSRCFTRKTPALLLLLPARSSAPMPAHGRLDLVPFPQPRASPEPEEAPPSADPFLETLTRLVRALAGPPARASPPRLALDPGALAGFPQGQVNLSDPAALERLLDGEEPLLLLLPPTAATTGVPATPQGPKSPLWAAGLARRVAAELQAVAAELRALPGLPPAAPPLLARLLALCPGNPDSPGGPLRALLLLKALQGLRAEWRGRERSGSARAQRSAGAAAADGPCALRELSVDLRAERSVLIPETYQANNCQGACGWPQSDRNPRYGNHVVLLLKMQARGATLARPPCCVPTAYTGKLLISLSEERISAHHVPNMVATECGCR.

The signal sequence occupies residues 1–24 (MPGPSLSLALVLSAMGALLRPGTP). A propeptide spanning residues 25-466 (REEVFSTSAL…ERSGSARAQR (442 aa)) is cleaved from the precursor. N-linked (GlcNAc...) asparagine glycosylation is found at Asn78 and Asn344. Intrachain disulfides connect Cys477-Cys541, Cys503-Cys572, and Cys507-Cys574.

Belongs to the TGF-beta family. In terms of assembly, homodimer; disulfide-linked. Post-translationally, preproprotein is proteolytically processed to generate N- and C-terminal cleavage products that homodimerize and associate to form a biologically active non-covalent complex. Binding of the non-covalent complex to AMHR2 induces dissociation of the pro-region from the mature C-terminal dimer. The N-terminal portion of the protein, despite having no intrinsic activity, has the role of amplifying the activity of the C-terminus. In terms of tissue distribution, expressed in fetal testis and adult ovaries.

It localises to the secreted. Plays an important role in several reproductive functions. Induces Muellerian duct regression during male fetal sexual differentiation and plays a role in Leydig cell differentiation and function. In female acts as a negative regulator of the primordial to primary follicle transition and decreases FSH sensitivity of growing follicles. AMH signals by binding to a specific type-II receptor, AMHR2, that heterodimerizes with type-I receptors (ACVR1 and BMPR1A), and recruiting SMAD proteins that are translocated to the nucleus to regulate target gene expression. This chain is Muellerian-inhibiting factor (AMH), found in Bos taurus (Bovine).